Here is a 109-residue protein sequence, read N- to C-terminus: Small ribosomal subunit protein eS25 (109 aa).

The tract at residues 1–36 is disordered; it reads MGGASKKPISTVEKRMKKMAEEQQKKQQKRATTKTG. Residues 12–25 show a composition bias toward basic and acidic residues; the sequence is VEKRMKKMAEEQQK.

This sequence belongs to the eukaryotic ribosomal protein eS25 family.

The sequence is that of Small ribosomal subunit protein eS25 (rps25e) from Sulfurisphaera tokodaii (strain DSM 16993 / JCM 10545 / NBRC 100140 / 7) (Sulfolobus tokodaii).